A 596-amino-acid chain; its full sequence is Elongation factor 4 (596 aa).

The 182-residue stretch at 2-183 folds into the tr-type G domain; that stretch reads KNIRNFSIIA…AIITRIPAPN (182 aa). GTP is bound by residues 14–19 and 130–133; these read DHGKST and NKID.

This sequence belongs to the TRAFAC class translation factor GTPase superfamily. Classic translation factor GTPase family. LepA subfamily.

The protein localises to the cell inner membrane. The catalysed reaction is GTP + H2O = GDP + phosphate + H(+). Its function is as follows. Required for accurate and efficient protein synthesis under certain stress conditions. May act as a fidelity factor of the translation reaction, by catalyzing a one-codon backward translocation of tRNAs on improperly translocated ribosomes. Back-translocation proceeds from a post-translocation (POST) complex to a pre-translocation (PRE) complex, thus giving elongation factor G a second chance to translocate the tRNAs correctly. Binds to ribosomes in a GTP-dependent manner. The protein is Elongation factor 4 of Campylobacter concisus (strain 13826).